A 360-amino-acid polypeptide reads, in one-letter code: Peptide chain release factor 1 (360 aa).

Gln235 carries the post-translational modification N5-methylglutamine.

It belongs to the prokaryotic/mitochondrial release factor family. Methylated by PrmC. Methylation increases the termination efficiency of RF1.

The protein resides in the cytoplasm. Peptide chain release factor 1 directs the termination of translation in response to the peptide chain termination codons UAG and UAA. This is Peptide chain release factor 1 from Paracidovorax citrulli (strain AAC00-1) (Acidovorax citrulli).